The following is a 271-amino-acid chain: tRNA pseudouridine synthase A (271 aa).

The active-site Nucleophile is the D51. Y109 lines the substrate pocket.

This sequence belongs to the tRNA pseudouridine synthase TruA family. Homodimer.

It carries out the reaction uridine(38/39/40) in tRNA = pseudouridine(38/39/40) in tRNA. Its function is as follows. Formation of pseudouridine at positions 38, 39 and 40 in the anticodon stem and loop of transfer RNAs. This Methylococcus capsulatus (strain ATCC 33009 / NCIMB 11132 / Bath) protein is tRNA pseudouridine synthase A.